The following is a 763-amino-acid chain: Phosphoglycerol transferase I (763 aa).

4 helical membrane passes run 1–21 (MSEL…AWKA), 26–46 (WWFA…ITLY), 77–97 (ILPG…LGWI), and 108–128 (VGYS…SPAF).

The protein belongs to the OpgB family.

The protein localises to the cell inner membrane. It carries out the reaction a phosphatidylglycerol + a membrane-derived-oligosaccharide D-glucose = a 1,2-diacyl-sn-glycerol + a membrane-derived-oligosaccharide 6-(glycerophospho)-D-glucose.. The protein operates within glycan metabolism; osmoregulated periplasmic glucan (OPG) biosynthesis. Transfers a phosphoglycerol residue from phosphatidylglycerol to the membrane-bound nascent glucan backbones. This chain is Phosphoglycerol transferase I, found in Salmonella newport (strain SL254).